The primary structure comprises 137 residues: Nucleoside diphosphate kinase (137 aa).

Residues K9, F57, R85, T91, R102, and N112 each coordinate ATP. H115 serves as the catalytic Pros-phosphohistidine intermediate.

The protein belongs to the NDK family. As to quaternary structure, homotetramer. Mg(2+) is required as a cofactor.

The protein localises to the cytoplasm. It carries out the reaction a 2'-deoxyribonucleoside 5'-diphosphate + ATP = a 2'-deoxyribonucleoside 5'-triphosphate + ADP. The enzyme catalyses a ribonucleoside 5'-diphosphate + ATP = a ribonucleoside 5'-triphosphate + ADP. Major role in the synthesis of nucleoside triphosphates other than ATP. The ATP gamma phosphate is transferred to the NDP beta phosphate via a ping-pong mechanism, using a phosphorylated active-site intermediate. This chain is Nucleoside diphosphate kinase, found in Leptospira interrogans serogroup Icterohaemorrhagiae serovar Lai (strain 56601).